A 330-amino-acid polypeptide reads, in one-letter code: ADP-L-glycero-D-manno-heptose-6-epimerase (330 aa).

Residues 11 to 12 (FI), 32 to 33 (DN), Lys-39, Lys-54, 75 to 79 (EGACS), and Asn-92 each bind NADP(+). Residue Tyr-139 is the Proton acceptor of the active site. Lys-143 contacts NADP(+). Asn-168 provides a ligand contact to substrate. Residues Val-169 and Lys-177 each contribute to the NADP(+) site. Lys-177 functions as the Proton acceptor in the catalytic mechanism. Residues Arg-179, His-186, 200 to 203 (FGEY), Arg-213, and Tyr-292 contribute to the substrate site.

The protein belongs to the NAD(P)-dependent epimerase/dehydratase family. HldD subfamily. As to quaternary structure, homopentamer. Requires NADP(+) as cofactor.

It carries out the reaction ADP-D-glycero-beta-D-manno-heptose = ADP-L-glycero-beta-D-manno-heptose. Its pathway is nucleotide-sugar biosynthesis; ADP-L-glycero-beta-D-manno-heptose biosynthesis; ADP-L-glycero-beta-D-manno-heptose from D-glycero-beta-D-manno-heptose 7-phosphate: step 4/4. In terms of biological role, catalyzes the interconversion between ADP-D-glycero-beta-D-manno-heptose and ADP-L-glycero-beta-D-manno-heptose via an epimerization at carbon 6 of the heptose. This is ADP-L-glycero-D-manno-heptose-6-epimerase from Burkholderia ambifaria (strain ATCC BAA-244 / DSM 16087 / CCUG 44356 / LMG 19182 / AMMD) (Burkholderia cepacia (strain AMMD)).